The following is a 395-amino-acid chain: MTKALYLDCHAGIAGDMLLSALVDLGAHPEDIESELKKLPLDQFKLHFQKRVKQGIHAMTLNIDVKESNHHRHVNDIFKMIDDSTLPERVKYRSKKIFEIIGQAEAKIHGMSFEEVHFHEVGAMDSIIDIIGGCIALEQLGINTLYCSAIPTGHGKIHIAHGIYPIPAPATAEILKGIPIAHFDVQSELTTPTGAAFAKGLVSSFGPFPSATIQHIGYGAGSKDFNFPNILRVIQFDSEFEQQDSVQVIECQIDDMTPEALGDFMNNALEQGALDAYYTPIFMKKSRPSTQLTLICKLHDKIYFEQLILQETSSLGVRSTSVNRKILNRAFKILSTQHGTVSIKFGLQNGKIMKMKPEYEDLKKMAKTTNQPFQVIHNEVLQQLYQTYRIGDILQ.

Belongs to the LarC family.

It catalyses the reaction Ni(II)-pyridinium-3,5-bisthiocarboxylate mononucleotide = pyridinium-3,5-bisthiocarboxylate mononucleotide + Ni(2+). Its function is as follows. Involved in the biosynthesis of a nickel-pincer cofactor ((SCS)Ni(II) pincer complex). Binds Ni(2+), and functions in nickel delivery to pyridinium-3,5-bisthiocarboxylic acid mononucleotide (P2TMN), to form the mature cofactor. Is thus probably required for the activation of nickel-pincer cofactor-dependent enzymes. The protein is Pyridinium-3,5-bisthiocarboxylic acid mononucleotide nickel insertion protein of Staphylococcus epidermidis (strain ATCC 35984 / DSM 28319 / BCRC 17069 / CCUG 31568 / BM 3577 / RP62A).